We begin with the raw amino-acid sequence, 387 residues long: O-methyltransferase asqD (387 aa).

Asp-252 contacts S-adenosyl-L-methionine. The Proton acceptor role is filled by His-294.

It belongs to the class I-like SAM-binding methyltransferase superfamily. Cation-independent O-methyltransferase family.

It participates in secondary metabolite biosynthesis. The protein operates within alkaloid biosynthesis. Its pathway is mycotoxin biosynthesis. Functionally, O-methyltransferase; part of the gene cluster that mediates the biosynthesis of the aspoquinolone mycotoxins. The role of asqD within the aspoquinolone pathway has still to be determined. The first step of the pathway is catalyzed by the nonribosomal peptide synthetase asqK that condenses anthranilic acid and O-methyl-L-tyrosine to produce 4'-methoxycyclopeptin. 4'-methoxycyclopeptin is then converted to 4'-methoxydehydrocyclopeptin by the ketoglutarate-dependent dioxygenase asqJ. AsqJ also converts its first product 4'-methoxydehydrocyclopeptin to 4'-methoxycyclopenin. The following conversion of 4'-methoxycyclopenin into 4'-methoxyviridicatin is catalyzed by the cyclopenase asqI. 4'-methoxyviridicatin is the precursor of quinolone natural products, and is further converted to quinolinone B. The prenyltransferase asqH1 then catalyzes the canonical Friedel-Crafts alkylation of quinolinone B with dimethylallyl cation to yield dimethylallyl quinolone, which is subjected to FAD-dependent dehydrogenation by the FAD-linked oxidoreductase asqF to yield conjugated aryl diene. The delta(3') double bond then serves as the site of the second alkylation with DMAPP catalyzed by the prenyltransferase asqH2 to yield a carbenium ion intermediate, which can be attacked by H(2)O to yield a styrenyl quinolone containing a C3'-hydroxyprenyl chain. The FAD-dependent monooxygenase asqG performs epoxidation of the terminal C7'-C8' olefin. Finally, after dehydratation of the epoxide at C3 by asqC, the quinolone epoxide rearrangement protein asqO catalyzes an enzymatic 3-exo-tet cyclization to yield the cyclopropyl-THF ring system in aspoquinolone. In Emericella nidulans (strain FGSC A4 / ATCC 38163 / CBS 112.46 / NRRL 194 / M139) (Aspergillus nidulans), this protein is O-methyltransferase asqD.